The primary structure comprises 909 residues: WD repeat-containing protein 20 homolog (909 aa).

Residues 58-132 are disordered; the sequence is SPAQGKLGSD…SAGNNTVEAR (75 aa). Low complexity-rich tracts occupy residues 80 to 107 and 115 to 127; these read GANT…AISN and SHSN…AGNN. WD repeat units follow at residues 248–288, 321–362, 363–402, and 470–517; these read IDKT…AATA, TDNC…GIAR, SYFG…VVAR, and ADRN…LRHP. Disordered regions lie at residues 458–483, 554–628, 661–699, 720–739, and 749–775; these read FEGF…FRSD, SGQA…AGSV, SDSI…NSGS, SEKK…RQHR, and NQHN…GHSS. 2 stretches are compositionally biased toward polar residues: residues 555–569 and 595–606; these read GQAT…SCSP and TANCTISSQSSP. Low complexity-rich tracts occupy residues 612-628 and 673-699; these read EAAT…AGSV and GQRP…NSGS. One copy of the WD 5 repeat lies at 856 to 893; the sequence is IAHERLTALIFREDCFLTACQDGFIYTWARPGHATHAT.

Component of the Usp12-46 deubiquitylase complex consisting of Usp12-46, Wdr20 and Uaf1; regulatory subunit that, together with Uaf1, stabilizes Usp12-46. The Usp12-46 deubiquitylase complex associates with arr/arrow; the interaction leads to deubiquitination and stabilization of arr/arrow.

Regulatory component of the Usp12-46 deubiquitylase complex. This complex deubiquitylates the wg/wingless-signaling receptor arr/arrow, which stabilizes the receptor and increases its concentration at the cell surface; this enhances the sensitivity of cells to wg/wingless-signal stimulation. This increases the amplitude and spatial range of the signaling response to the wg/wingless morphogen gradient, facilitating the precise concentration-dependent regulation of its target genes. Required for wg/wingless-mediated signaling in the wing imaginal disc and for wg/wingless-dependent regulation of intestinal stem cell proliferation. This chain is WD repeat-containing protein 20 homolog, found in Drosophila melanogaster (Fruit fly).